Consider the following 271-residue polypeptide: NAD kinase (271 aa).

Residue D52 is the Proton acceptor of the active site. NAD(+)-binding positions include 52–53, 129–130, R155, D157, and A192; these read DG and NE.

It belongs to the NAD kinase family. A divalent metal cation serves as cofactor.

The protein resides in the cytoplasm. The catalysed reaction is NAD(+) + ATP = ADP + NADP(+) + H(+). Involved in the regulation of the intracellular balance of NAD and NADP, and is a key enzyme in the biosynthesis of NADP. Catalyzes specifically the phosphorylation on 2'-hydroxyl of the adenosine moiety of NAD to yield NADP. The chain is NAD kinase from Geobacillus stearothermophilus (Bacillus stearothermophilus).